Consider the following 588-residue polypeptide: Tannase (588 aa).

The signal sequence occupies residues 1–18; sequence MRQHSRMAVAALAAGANA. Disulfide bonds link C25-C71, C194-C502, and C261-C278. S195 serves as the catalytic Acyl-ester intermediate. Ca(2+) is bound by residues D262, D265, D269, and V271. Q317 carries the pyrrolidone carboxylic acid modification. Active-site charge relay system residues include D455 and H501.

It belongs to the tannase family. Heterooctamer of 4 33 kDa and 4 30 kDa subunits linked by disulfide bond(s). Post-translationally, the protein is glycosylated to a carbohydrate content of 22.7%. In terms of processing, the N-terminus of the 30 kDa subunit is blocked.

The enzyme catalyses digallate + H2O = 2 3,4,5-trihydroxybenzoate + H(+). In terms of biological role, hydrolyzes ester bonds of tannic acid to produce gallic acid and glucose. The protein is Tannase of Aspergillus oryzae (strain ATCC 42149 / RIB 40) (Yellow koji mold).